A 737-amino-acid chain; its full sequence is Polyribonucleotide nucleotidyltransferase (737 aa).

Mg(2+)-binding residues include D489 and D495. Positions 556 to 615 (PKIDTIKIDVDKIKIVIGKGGETIDKIIAETGVKIDIDEEGNVSIYSSDQDAINRAKEII) constitute a KH domain. The region spanning 625 to 693 (DEVYRAKVVR…EKGRVDASMK (69 aa)) is the S1 motif domain. Residues 691-737 (SMKALLPRPPKPERDEKGEKSERPYRPRHHKDHKPKKEITETPKDSE) are disordered. Basic and acidic residues-rich tracts occupy residues 700 to 715 (PKPE…ERPY) and 725 to 737 (PKKE…KDSE).

This sequence belongs to the polyribonucleotide nucleotidyltransferase family. Mg(2+) is required as a cofactor.

The protein resides in the cytoplasm. It carries out the reaction RNA(n+1) + phosphate = RNA(n) + a ribonucleoside 5'-diphosphate. Its function is as follows. Involved in mRNA degradation. Catalyzes the phosphorolysis of single-stranded polyribonucleotides processively in the 3'- to 5'-direction. The chain is Polyribonucleotide nucleotidyltransferase from Streptococcus pneumoniae (strain Hungary19A-6).